The primary structure comprises 253 residues: MNDLLLENLFGEKALCAQVTRDQLLEIIAAGARSKFPKSLLSMYRVTPRVMTRYPLKLITNESITGVVITTVYNLKKNLNIPQNNKLTTQDIERYYLDKSVEVINLMVGNTSLGDLACGRPRRTKSSKKKDPVIFLGISAPLILVMNSKKSINTYIQDKKSDPSSDYVNINPGIGVLENYGNTYLLDIHNPSSVLTISTIYGLDNNMELKKLSTASEIDAYQDVNIGKSVDLKKFNEIFNTMKKHLSLSNFSI.

A propeptide spanning residues 1–31 is cleaved from the precursor; it reads MNDLLLENLFGEKALCAQVTRDQLLEIIAAG.

This sequence belongs to the chordopoxvirinae VP8 family. In terms of processing, undergoes morphogenesis-associated proteolysis which cleaves the 28 kDa to a 25-kDa product. Proteolytic cleavage of major core proteins P4a (A10L), P4b (A3L), and VP8 (L4R), which occurs at a late stage of core formation, is required for production of infectious mature virions (MV).

It localises to the virion. Functionally, major core structural protein. In Vertebrata (FPV), this protein is Core protein VP8.